We begin with the raw amino-acid sequence, 473 residues long: Ribulose bisphosphate carboxylase large chain (473 aa).

Substrate-binding residues include Asn-116 and Thr-166. Lys-168 (proton acceptor) is an active-site residue. Substrate is bound at residue Lys-170. Lys-194, Asp-196, and Glu-197 together coordinate Mg(2+). Residue Lys-194 is modified to N6-carboxylysine. Catalysis depends on His-287, which acts as the Proton acceptor. Substrate-binding residues include Arg-288, His-320, and Ser-372.

It belongs to the RuBisCO large chain family. Type I subfamily. Heterohexadecamer of 8 large chains and 8 small chains. The cofactor is Mg(2+).

It carries out the reaction 2 (2R)-3-phosphoglycerate + 2 H(+) = D-ribulose 1,5-bisphosphate + CO2 + H2O. The enzyme catalyses D-ribulose 1,5-bisphosphate + O2 = 2-phosphoglycolate + (2R)-3-phosphoglycerate + 2 H(+). Functionally, ruBisCO catalyzes two reactions: the carboxylation of D-ribulose 1,5-bisphosphate, the primary event in carbon dioxide fixation, as well as the oxidative fragmentation of the pentose substrate. Both reactions occur simultaneously and in competition at the same active site. The polypeptide is Ribulose bisphosphate carboxylase large chain (Halorhodospira halophila (strain DSM 244 / SL1) (Ectothiorhodospira halophila (strain DSM 244 / SL1))).